The primary structure comprises 386 residues: IgA receptor (386 aa).

Residues 1 to 41 (MARKDTNKQYSLRKLKTGTASVAVAVAVLGAGFANQTEVKA) form the signal peptide. The tract at residues 42–152 (AEIKKPQADS…QKKHQQEQQQ (111 aa)) is igA-binding. 7 stretches are compositionally biased toward basic and acidic residues: residues 79–88 (YADDKEKDPQ), 97–128 (QDLRKREGQYQDKIEELEKERKEKQERQEQLE), 134–166 (EADKHYQEQQKKHQQEQQQLEAEKQKLAKDKQI), 174–201 (LSRDLEASRAAKKELEAEHQKLKEEKQI), 209–221 (LSRDLEASREAKK), 233–243 (EHQKLKEDKQI), and 251–267 (LSRDLEASREAKKKVEA). Disordered regions lie at residues 79–221 (YADD…EAKK) and 233–268 (EHQKLKEDKQISDASRQGLSRDLEASREAKKKVEAD). 3 C repeats span residues 158–192 (QKLAKDKQISDASRQGLSRDLEASRAAKKELEAEH), 193–227 (QKLKEEKQISDASRQGLSRDLEASREAKKKVEADL), and 235–269 (QKLKEDKQISDASRQGLSRDLEASREAKKKVEADL). D repeat units lie at residues 302–307 (ARLEAE), 308–313 (AKALKE), 316–321 (AKQAEE), and 323–328 (AKLKGN). The interval 323 to 360 (AKLKGNQTPNAKVAPQANRSRSAMTQQKRTLPSTGETA) is disordered. The segment covering 339 to 359 (ANRSRSAMTQQKRTLPSTGET) has biased composition (polar residues). The LPXTG sorting signal motif lies at 353–357 (LPSTG). At Thr-356 the chain carries Pentaglycyl murein peptidoglycan amidated threonine. Residues 357 to 386 (GETANPFFTAAAATVMVSAGMLALKRKEEN) constitute a propeptide, removed by sortase.

This sequence belongs to the M protein family.

It is found in the secreted. The protein localises to the cell wall. Binds IgA of both subclasses, and also binds polyclonal IgG weakly. The sequence is that of IgA receptor (arp4) from Streptococcus pyogenes.